The sequence spans 175 residues: Disulfide bond formation protein B (175 aa).

Residues 1 to 13 (MTAFTRFAHSRAS) are Cytoplasmic-facing. The chain crosses the membrane as a helical span at residues 14–30 (WLILTGSAIALEAAALY). The Periplasmic segment spans residues 31 to 48 (FQYVMKLDPCVMCIYQRL). C40 and C43 are joined by a disulfide. The helical transmembrane segment at 49-64 (AVFGILAAGLIGMTAP) threads the bilayer. Residues 65-71 (KYRIVRI) lie on the Cytoplasmic side of the membrane. The helical transmembrane segment at 72–89 (LGALGWAVSATWGLKLAL) threads the bilayer. Over 90–144 (ALVDMQNNPSPFSTCSFLPEFPAWMPLHEWFPSVMLPTGMCTDVPWQFMGVTMAE) the chain is Periplasmic. C104 and C130 are joined by a disulfide. Residues 145 to 163 (WMVVAFSGYLVALLLFIVP) traverse the membrane as a helical segment. Over 164-175 (ILSGSNKPSLYK) the chain is Cytoplasmic.

This sequence belongs to the DsbB family.

It is found in the cell inner membrane. Functionally, required for disulfide bond formation in some periplasmic proteins. Acts by oxidizing the DsbA protein. This is Disulfide bond formation protein B from Shewanella sp. (strain MR-4).